The primary structure comprises 345 residues: Protein-glutamate methylesterase/protein-glutamine glutaminase 2 (345 aa).

The Response regulatory domain maps to Lys-7–Leu-124. Asp-58 carries the post-translational modification 4-aspartylphosphate. In terms of domain architecture, CheB-type methylesterase spans Ser-154–Ser-345. Catalysis depends on residues Ser-166, His-192, and Asp-289.

It belongs to the CheB family. Post-translationally, phosphorylated by CheA. Phosphorylation of the N-terminal regulatory domain activates the methylesterase activity.

The protein resides in the cytoplasm. It carries out the reaction [protein]-L-glutamate 5-O-methyl ester + H2O = L-glutamyl-[protein] + methanol + H(+). It catalyses the reaction L-glutaminyl-[protein] + H2O = L-glutamyl-[protein] + NH4(+). Functionally, involved in chemotaxis. Part of a chemotaxis signal transduction system that modulates chemotaxis in response to various stimuli. Catalyzes the demethylation of specific methylglutamate residues introduced into the chemoreceptors (methyl-accepting chemotaxis proteins or MCP) by CheR. Also mediates the irreversible deamidation of specific glutamine residues to glutamic acid. This is Protein-glutamate methylesterase/protein-glutamine glutaminase 2 from Vibrio vulnificus (strain YJ016).